The following is a 439-amino-acid chain: Trigger factor (439 aa).

Residues 175 to 260 (SDKLVIDYQN…VKSVYVMKGM (86 aa)) form the PPIase FKBP-type domain.

This sequence belongs to the FKBP-type PPIase family. Tig subfamily.

It localises to the cytoplasm. The catalysed reaction is [protein]-peptidylproline (omega=180) = [protein]-peptidylproline (omega=0). In terms of biological role, involved in protein export. Acts as a chaperone by maintaining the newly synthesized protein in an open conformation. Functions as a peptidyl-prolyl cis-trans isomerase. The polypeptide is Trigger factor (Ehrlichia chaffeensis (strain ATCC CRL-10679 / Arkansas)).